The sequence spans 235 residues: Phosphoribosylaminoimidazole-succinocarboxamide synthase (235 aa).

This sequence belongs to the SAICAR synthetase family.

It catalyses the reaction 5-amino-1-(5-phospho-D-ribosyl)imidazole-4-carboxylate + L-aspartate + ATP = (2S)-2-[5-amino-1-(5-phospho-beta-D-ribosyl)imidazole-4-carboxamido]succinate + ADP + phosphate + 2 H(+). It participates in purine metabolism; IMP biosynthesis via de novo pathway; 5-amino-1-(5-phospho-D-ribosyl)imidazole-4-carboxamide from 5-amino-1-(5-phospho-D-ribosyl)imidazole-4-carboxylate: step 1/2. This is Phosphoribosylaminoimidazole-succinocarboxamide synthase from Clostridium perfringens (strain 13 / Type A).